Consider the following 576-residue polypeptide: MGEALSNLEIARGAKLLPIEEVGRSMGLREERHLEPYGRHVAKVDLCAIEDLSERPKAKYILVSAITPTPLGEGKTTTTVGLGQAFSHIGKRATIAIRQASMGPAFGIKGGAAGGGYSQVVPMERLNLHLTGDLHAVTEAHNMLAAMIDNHLYHGNGLGIEPHSISWRRVMDVNDRSLRNIVIGLGARTDGVPRQSGFDITAASEVMAILALASSLEDLRERLGRIVIGHNREGNPVSAEDVRGAGAMAVILKEAIKPNLMQTLEGTPALVHAGPFGNIATGNSSVVADLIGIRTADYLITEAGFGADMGAERFFNIKCRISGLEPDAAVVVATVRALKAHSGRYQIKAGAPLPEELLEENPQDVLAGAENLKKQIENIKLHGVPAVVAINAFPTDHPSEHKAIEEAAKEVGARCAVCRHFTEGGKGAVELARALEETIEENERERRRGGGGSFRFLYPLEMPLKQKIETIAREVYGAEGVEYDAEALRALEGFERAGFGRLPVCLAKTHLSLSSDPALKGAPRGWKLSVREVRASVGAGFIYPICGQMRTMPGLSAHPAAERIDLDGEGNVVGLF.

An ATP-binding site is contributed by 69–76; the sequence is TPLGEGKT.

Belongs to the formate--tetrahydrofolate ligase family.

The catalysed reaction is (6S)-5,6,7,8-tetrahydrofolate + formate + ATP = (6R)-10-formyltetrahydrofolate + ADP + phosphate. It functions in the pathway one-carbon metabolism; tetrahydrofolate interconversion. In Rubrobacter xylanophilus (strain DSM 9941 / JCM 11954 / NBRC 16129 / PRD-1), this protein is Formate--tetrahydrofolate ligase 1.